The following is a 707-amino-acid chain: MNQELLSVGSKRRRTGGSLRGNPSSSQVDEEQMNRVVEEEQQQQLRQQEEEHTARNGEVVGVEPRPGGQNDSQQGQLEENNNRFISVDEDSSGNQEEQEEDEEHAGEQDEEDEEEEEMDQESDDFDQSDDSSREDEHTHTNSVTNSSSIVDLPVHQLSSPFYTKTTKMKRKLDHGSEVRSFSLGKKPCKVSEYTSTTGLVPCSATPTTFGDLRAANGQGQQRRRITSVQPPTGLQEWLKMFQSWSGPEKLLALDELIDSCEPTQVKHMMQVIEPQFQRDFISLLPKELALYVLSFLEPKDLLQAAQTCRYWRILAEDNLLWREKCKEEGIDEPLHIKRRKVIKPGFIHSPWKSAYIRQHRIDTNWRRGELKSPKVLKGHDDHVITCLQFCGNRIVSGSDDNTLKVWSAVTGKCLRTLVGHTGGVWSSQMRDNIIISGSTDRTLKVWNAETGECIHTLYGHTSTVRCMHLHEKRVVSGSRDATLRVWDIETGQCLHVLMGHVAAVRCVQYDGRRVVSGAYDFMVKVWDPETETCLHTLQGHTNRVYSLQFDGIHVVSGSLDTSIRVWDVETGNCIHTLTGHQSLTSGMELKDNILVSGNADSTVKIWDIKTGQCLQTLQGPNKHQSAVTCLQFNKNFVITSSDDGTVKLWDLKTGEFIRNLVTLESGGSGGVVWRIRASNTKLVCAVGSRNGTEETKLLVLDFDVDMK.

Positions 1–151 (MNQELLSVGS…SVTNSSSIVD (151 aa)) are disordered. Phosphoserine; by ATM is present on Ser-26. Low complexity predominate over residues 57–68 (GEVVGVEPRPGG). The segment covering 69-84 (QNDSQQGQLEENNNRF) has biased composition (polar residues). The segment covering 87–129 (VDEDSSGNQEEQEEDEEHAGEQDEEDEEEEEMDQESDDFDQSD) has biased composition (acidic residues). Basic and acidic residues predominate over residues 130 to 139 (DSSREDEHTH). Thr-205 is subject to Phosphothreonine. At Ser-227 the chain carries Phosphoserine; by SGK1. Positions 278–324 (RDFISLLPKELALYVLSFLEPKDLLQAAQTCRYWRILAEDNLLWREK) constitute an F-box domain. WD repeat units follow at residues 378-418 (GHDD…RTLV), 420-456 (HTGG…CIHT), 459-498 (GHTS…HVLM), 500-536 (HVAA…CLHT), 539-578 (GHTN…HTLT), 580-618 (HQSL…QTLQ), and 622-659 (KHQS…FIRN).

In terms of assembly, homodimer; homodimerization plays a role in substrate binding and/or ubiquitination and degradation. Component of the SCF(FBXW7) complex consisting of CUL1, RBX1, SKP1 and FBXW7. Interacts (via F-box domain) with SKP1. Interacts (via F-box domain) with pseudophosphatase STYX; the interaction is direct and prevents FBXW7 interaction with SKP1. Interacts with cyclin-E (CCNE1 or CCNE2). Interacts with PSEN1. Forms a trimeric complex with NOTCH1 and SGK1. Interacts with NOTCH1 intracellular domain/NICD and NOTCH4 intracellular domain/NICD. Interacts with NOTCH2 intracellular domain (N2ICD). Interacts with MYC (when phosphorylated). Interacts with USP28, counteracting ubiquitination of MYC. Interacts with JUN. Found in a complex with JUN and PRR7. Interacts with JUN and PRR7; the interaction inhibits ubiquitination-mediated JUN degradation, promoting its phosphorylation and transcriptional activity. Interacts (when phosphorylated at Thr-205) with PIN1, disrupting FBXW7 dimerization and promoting FBXW7 autoubiquitination and degradation. Interacts with UBE2QL1. Interacts with FAM83D; promotes FBXW7 degradation. Interacts with MYCN; FBXW7 competes with AURKA for binding to unphosphorylated MYCN but not for binding to phosphorylated MYCN. Interacts with STOML1. Interacts with NFE2L1. Interacts with USP36, counteracting ubiquitination of MYC. Interacts with NR1D1. Interacts with RICTOR; mediates RICTOR ubiquitination and degradation. Interacts with USP38, counteracting ubiquitination of MYC. As to quaternary structure, (Microbial infection) Interacts (via WD repeats) with SV40 large T antigen (via CPD region). In terms of processing, phosphorylation at Thr-205 promotes interaction with PIN1, leading to disrupt FBXW7 dimerization and promoting FBXW7 autoubiquitination and degradation. Phosphorylated by ATM at Ser-26 in response to DNA damage, promoting recruitment to DNA damage sites and 'Lys-63'-linked ubiquitination of phosphorylated XRCC4. Ubiquitinated: autoubiquitinates following phosphorylation at Thr-205 and subsequent interaction with PIN1. Ubiquitination leads to its proteasomal degradation. Widely expressed. As to expression, expressed in brain.

The protein resides in the nucleus. It is found in the nucleoplasm. Its subcellular location is the chromosome. It localises to the cytoplasm. The protein localises to the nucleolus. The protein operates within protein modification; protein ubiquitination. Functionally, substrate recognition component of a SCF (SKP1-CUL1-F-box protein) E3 ubiquitin-protein ligase complex which mediates the ubiquitination and subsequent proteasomal degradation of target proteins. Recognizes and binds phosphorylated sites/phosphodegrons within target proteins and thereafter brings them to the SCF complex for ubiquitination. Identified substrates include cyclin-E (CCNE1 or CCNE2), DISC1, JUN, MYC, NOTCH1 released notch intracellular domain (NICD), NFE2L1, NOTCH2, MCL1, MLST8, RICTOR, and probably PSEN1. Acts as a negative regulator of JNK signaling by binding to phosphorylated JUN and promoting its ubiquitination and subsequent degradation. Involved in bone homeostasis and negative regulation of osteoclast differentiation. Regulates the amplitude of the cyclic expression of hepatic core clock genes and genes involved in lipid and glucose metabolism via ubiquitination and proteasomal degradation of their transcriptional repressor NR1D1; CDK1-dependent phosphorylation of NR1D1 is necessary for SCF(FBXW7)-mediated ubiquitination. Also able to promote 'Lys-63'-linked ubiquitination in response to DNA damage. The SCF(FBXW7) complex facilitates double-strand break repair following phosphorylation by ATM: phosphorylation promotes localization to sites of double-strand breaks and 'Lys-63'-linked ubiquitination of phosphorylated XRCC4, enhancing DNA non-homologous end joining. The chain is F-box/WD repeat-containing protein 7 from Homo sapiens (Human).